The sequence spans 591 residues: Oxaloacetate decarboxylase alpha chain (591 aa).

The Pyruvate carboxyltransferase domain maps to isoleucine 3–glutamate 263. The region spanning proline 518–alanine 591 is the Biotinyl-binding domain. Lysine 557 is subject to N6-biotinyllysine.

Composed of three chains (alpha, beta, and gamma). The cofactor is biotin.

It carries out the reaction oxaloacetate + 2 Na(+)(in) + H(+) = pyruvate + 2 Na(+)(out) + CO2. In terms of biological role, catalyzes the decarboxylation of oxaloacetate coupled to Na(+) translocation. In Salmonella typhi, this protein is Oxaloacetate decarboxylase alpha chain (oadA1).